We begin with the raw amino-acid sequence, 125 residues long: Oxytocin-neurophysin 1 (125 aa).

The signal sequence occupies residues 1-19; that stretch reads MACPSLACCLLGLLALTSA. Cys20 and Cys25 are disulfide-bonded. The residue at position 28 (Gly28) is a Glycine amide. Intrachain disulfides connect Cys41–Cys85, Cys44–Cys58, Cys52–Cys75, Cys59–Cys65, Cys92–Cys104, Cys98–Cys116, and Cys105–Cys110.

Belongs to the vasopressin/oxytocin family. In terms of assembly, interacts with oxytocin receptor (Ki=1.5 nM). Interacts with vasopressin V1aR/AVPR1A (Ki=37 nM), V1bR/AVPR1B (Ki=222 nM), and V2R/AVPR2 receptors (Ki=823 nM).

Its function is as follows. Neurophysin 1 specifically binds oxytocin. In terms of biological role, oxytocin causes contraction of the smooth muscle of the uterus and of the mammary gland. Acts by binding to oxytocin receptor (OXTR). The protein is Oxytocin-neurophysin 1 (Oxt) of Rattus norvegicus (Rat).